We begin with the raw amino-acid sequence, 86 residues long: 4-hydroxyphenylacetate decarboxylase small subunit (86 aa).

[4Fe-4S] cluster-binding residues include histidine 3, cysteine 6, cysteine 19, cysteine 36, cysteine 45, cysteine 48, cysteine 62, and cysteine 80.

Belongs to the HPA decarboxylase small subunit family. As to quaternary structure, heterooctamer consisting of 4 large (HpdB) subunits and 4 small (HpdC) subunits, arranged as a tetramer of heterodimers. [4Fe-4S] cluster is required as a cofactor.

It catalyses the reaction 4-hydroxyphenylacetate + H(+) = 4-methylphenol + CO2. It carries out the reaction 3,4-dihydroxyphenylacetate + H(+) = 4-methylcatechol + CO2. Component of the HPA decarboxylase that decarboxylates phenylacetates with a hydroxyl group in the p-position. Active toward 4-hydroxyphenylacetate and 3,4-dihydroxyphenylacetate, forming 4-methylphenol and 4-methylcatechol, respectively. Is likely involved in the catabolism of aromatic amino acids such as tyrosine fermentation. 4-methylphenol (p-cresol) formation provides metabolic toxicity, which allows an active suppression of other microbes and may provide growth advantages for the producers in highly competitive environments. The small subunit is essential for enzymatic activity of HPA decarboxylase, and also seems to be involved in the regulation of the enzyme oligomeric state and catalytic activity. This Clostridium scatologenes protein is 4-hydroxyphenylacetate decarboxylase small subunit.